The sequence spans 391 residues: Chorismate synthase (391 aa).

R48 contacts NADP(+). FMN contacts are provided by residues 126–128 (RSS), G287, 302–306 (KPTSS), and R329.

This sequence belongs to the chorismate synthase family. FMNH2 serves as cofactor.

The catalysed reaction is 5-O-(1-carboxyvinyl)-3-phosphoshikimate = chorismate + phosphate. It participates in metabolic intermediate biosynthesis; chorismate biosynthesis; chorismate from D-erythrose 4-phosphate and phosphoenolpyruvate: step 7/7. Catalyzes the anti-1,4-elimination of the C-3 phosphate and the C-6 proR hydrogen from 5-enolpyruvylshikimate-3-phosphate (EPSP) to yield chorismate, which is the branch point compound that serves as the starting substrate for the three terminal pathways of aromatic amino acid biosynthesis. This reaction introduces a second double bond into the aromatic ring system. The polypeptide is Chorismate synthase (Sulfolobus acidocaldarius (strain ATCC 33909 / DSM 639 / JCM 8929 / NBRC 15157 / NCIMB 11770)).